The following is a 518-amino-acid chain: Glutamate--cysteine ligase (518 aa).

The protein belongs to the glutamate--cysteine ligase type 1 family. Type 1 subfamily.

It catalyses the reaction L-cysteine + L-glutamate + ATP = gamma-L-glutamyl-L-cysteine + ADP + phosphate + H(+). It functions in the pathway sulfur metabolism; glutathione biosynthesis; glutathione from L-cysteine and L-glutamate: step 1/2. This chain is Glutamate--cysteine ligase, found in Escherichia fergusonii (strain ATCC 35469 / DSM 13698 / CCUG 18766 / IAM 14443 / JCM 21226 / LMG 7866 / NBRC 102419 / NCTC 12128 / CDC 0568-73).